The primary structure comprises 279 residues: 3-methyl-2-oxobutanoate hydroxymethyltransferase (279 aa).

Positions 43 and 82 each coordinate Mg(2+). Residues 43–44 (DS), Asp-82, and Lys-112 contribute to the 3-methyl-2-oxobutanoate site. Glu-114 provides a ligand contact to Mg(2+). The Proton acceptor role is filled by Glu-181.

This sequence belongs to the PanB family. As to quaternary structure, homodecamer; pentamer of dimers. Mg(2+) serves as cofactor.

The protein localises to the cytoplasm. It carries out the reaction 3-methyl-2-oxobutanoate + (6R)-5,10-methylene-5,6,7,8-tetrahydrofolate + H2O = 2-dehydropantoate + (6S)-5,6,7,8-tetrahydrofolate. Its pathway is cofactor biosynthesis; (R)-pantothenate biosynthesis; (R)-pantoate from 3-methyl-2-oxobutanoate: step 1/2. Catalyzes the reversible reaction in which hydroxymethyl group from 5,10-methylenetetrahydrofolate is transferred onto alpha-ketoisovalerate to form ketopantoate. The chain is 3-methyl-2-oxobutanoate hydroxymethyltransferase from Halalkalibacterium halodurans (strain ATCC BAA-125 / DSM 18197 / FERM 7344 / JCM 9153 / C-125) (Bacillus halodurans).